We begin with the raw amino-acid sequence, 432 residues long: UDP-N-acetylmuramate--L-alanine ligase (432 aa).

Residue 108-114 (GAHGKTS) participates in ATP binding.

Belongs to the MurCDEF family.

The protein resides in the cytoplasm. It carries out the reaction UDP-N-acetyl-alpha-D-muramate + L-alanine + ATP = UDP-N-acetyl-alpha-D-muramoyl-L-alanine + ADP + phosphate + H(+). Its pathway is cell wall biogenesis; peptidoglycan biosynthesis. Functionally, cell wall formation. This chain is UDP-N-acetylmuramate--L-alanine ligase, found in Bacillus velezensis (strain DSM 23117 / BGSC 10A6 / LMG 26770 / FZB42) (Bacillus amyloliquefaciens subsp. plantarum).